The primary structure comprises 1371 residues: MAYSIANNPLLRKNFAKIHKIIDIPNLIDIQKNSYKRFLQLDTPVDARKNSGLEAVFRSVFPIRDFSDTASLEYVSYSLGAPKYDVEECHQRGMTFAAPMKVKVRLVVWDVAKDPGTRSIRDIKEQEVYFGEIPLMTDNGTFIINGTERVIVSQLHRSPGVFYDHDKGKTHSSGKVLYSARVIPYRGSWLDFEFDHKDILYVRIDRRRKMPATVLLKALGYSNDALINYFYKSEEVKLGDNGAMTKLADAELLSNQKATADIVDPATGEVILKANRKFTKAALRKMAEHGIKEIPISEEEVVAKVASHDIYDPATGEIIVECNEELTQAKLEEIIQKGITTFQVLFIDNLHVTSSFRDTILIDKIGSTDEALIEIYRRLRPGDPPTLKSALVLFENLFFNAERYDLSAVGRLKLNYKLGVDVPLDCMTLTREDILEVVRYLIELKNGKGNIDDIDHLGNRRVRAVGELLENQYRIGLVRMERAIKERMSLQEVENLMPHDLINSKPVSAVVKEFFGSSQLSQFMDQTNPLSEVTHKRRLSALGPGGLTRERAGFEVRDVHPTHYGRVCPIETPEGPNIGLIASLSTYARINEHGFVETPYRVVSEGKVTDEVRFFSALEEEGHAIAQANAEIDKDGRFAADYISARKSGEFVLVGRDELELMDVAPMQLVSVAASLIPFLENDDANRALMGSNMQRQAVPLLRADSPLVGTGMERVVARDSGVSSVARHNGVVESVDASRIVVKIDEDQYDATGTGVDIYNLIKFARSNQNTCINQRPVVKVGDHVKAGDIIADGPSTDMGELALGQNVLIAFMPWGGYNYEDSILISERLVKDDRYTSIHIEEFEAVARDTKLGKEEITSDIPNLGEETLKDLDESGIIRIGAEVRPGDILVGKITPKGETQLSPEEKLLRAIFGEKAGDVRDTSLRVPPGVEGTVIGAKIFSRKGADKDARTEIIEKAEEMRLRKDEQDEIRIIRDSAIGKLKKLLVGKAAAVKIEGSDGKVLIPKGAAITEEMLKSFSMDRWDEISIADDDTIDEKVAQTLSTLNQQIDIIKYVFDDKVQKLRRGDDLPPGVIKMVKVYIAIKRKLQVGDKMAGRHGNKGVVSRILPEEDMPYMEDGRPVEIVLNPLGVPSRMNVGQILEMHLGWGAKGLGWKIEEFLEKNAPHDEIKRFLKGAYDNPEMDRFLDTLEGEELLNLARRLKRGIPMSSPVFEGASEESIQSMLTHAGFSTTGQVTLYDGKSGDKFMHQVTVGIMYFLKLHHLVDDKIHARSIGPYSLVTQQPLGGKARFGGQRLGEMEVWAMEAYGAAYALQEFLTVKSDDVAGRTRMYEAIVKGKHTLEPGLPESFNVLIKELQSLGLDVELLEGDED.

Belongs to the RNA polymerase beta chain family. In terms of assembly, the RNAP catalytic core consists of 2 alpha, 1 beta, 1 beta' and 1 omega subunit. When a sigma factor is associated with the core the holoenzyme is formed, which can initiate transcription.

It carries out the reaction RNA(n) + a ribonucleoside 5'-triphosphate = RNA(n+1) + diphosphate. Its function is as follows. DNA-dependent RNA polymerase catalyzes the transcription of DNA into RNA using the four ribonucleoside triphosphates as substrates. The polypeptide is DNA-directed RNA polymerase subunit beta (Citrifermentans bemidjiense (strain ATCC BAA-1014 / DSM 16622 / JCM 12645 / Bem) (Geobacter bemidjiensis)).